Reading from the N-terminus, the 337-residue chain is tRNA N6-adenosine threonylcarbamoyltransferase (337 aa).

Positions 111 and 115 each coordinate Fe cation. Residues L134–G138, D167, G180, and N272 each bind substrate. D300 lines the Fe cation pocket.

This sequence belongs to the KAE1 / TsaD family. Fe(2+) is required as a cofactor.

It localises to the cytoplasm. The enzyme catalyses L-threonylcarbamoyladenylate + adenosine(37) in tRNA = N(6)-L-threonylcarbamoyladenosine(37) in tRNA + AMP + H(+). Required for the formation of a threonylcarbamoyl group on adenosine at position 37 (t(6)A37) in tRNAs that read codons beginning with adenine. Is involved in the transfer of the threonylcarbamoyl moiety of threonylcarbamoyl-AMP (TC-AMP) to the N6 group of A37, together with TsaE and TsaB. TsaD likely plays a direct catalytic role in this reaction. The protein is tRNA N6-adenosine threonylcarbamoyltransferase of Salmonella arizonae (strain ATCC BAA-731 / CDC346-86 / RSK2980).